A 117-amino-acid chain; its full sequence is Large ribosomal subunit protein eL34 (117 aa).

The protein belongs to the eukaryotic ribosomal protein eL34 family. As to quaternary structure, component of the large ribosomal subunit.

It is found in the cytoplasm. The protein localises to the cytosol. It localises to the endoplasmic reticulum. Component of the large ribosomal subunit. The ribosome is a large ribonucleoprotein complex responsible for the synthesis of proteins in the cell. In Danio rerio (Zebrafish), this protein is Large ribosomal subunit protein eL34 (rpl34).